Consider the following 288-residue polypeptide: MSQISAKDVKDLRDTTGIGMMDCKKALEETGGDMEKAIEYLRKKGAALAAKRAEKDASEGMICIRVSADRKSGVILELNCETDFVARGEVFTGFAGALGDLALENRTVSTDALLKLRMADAMGGELVDDAIKTMTGKLGEKIDLKRLFFFDAADGLVESYVHPGAQLGAIIHLATDKPEAVAPLAKDLAMQVAAAAPIEVDRSAVPQELIAKESEIYRQQALGQGKKEEFVDKIVLGRLDKYYQEVVLLEQSFIKSNNMKVSAVLDEFRKLLQAAVDVKEFVRYQLGE.

Positions 82–85 (TDFV) are involved in Mg(2+) ion dislocation from EF-Tu.

Belongs to the EF-Ts family.

It is found in the cytoplasm. In terms of biological role, associates with the EF-Tu.GDP complex and induces the exchange of GDP to GTP. It remains bound to the aminoacyl-tRNA.EF-Tu.GTP complex up to the GTP hydrolysis stage on the ribosome. The protein is Elongation factor Ts of Chlorobium luteolum (strain DSM 273 / BCRC 81028 / 2530) (Pelodictyon luteolum).